We begin with the raw amino-acid sequence, 189 residues long: Probable nicotinate-nucleotide adenylyltransferase (189 aa).

Belongs to the NadD family.

The catalysed reaction is nicotinate beta-D-ribonucleotide + ATP + H(+) = deamido-NAD(+) + diphosphate. It functions in the pathway cofactor biosynthesis; NAD(+) biosynthesis; deamido-NAD(+) from nicotinate D-ribonucleotide: step 1/1. In terms of biological role, catalyzes the reversible adenylation of nicotinate mononucleotide (NaMN) to nicotinic acid adenine dinucleotide (NaAD). This is Probable nicotinate-nucleotide adenylyltransferase from Bacillus mycoides (strain KBAB4) (Bacillus weihenstephanensis).